A 568-amino-acid polypeptide reads, in one-letter code: MARVEL domain-containing protein 2 (568 aa).

Disordered regions lie at residues 1 to 72 and 116 to 163; these read MSGG…YPSD and SGGV…SYNS. Residues 1–211 are Cytoplasmic-facing; that stretch reads MSGGGSSSGP…YMKSWAGLLR (211 aa). A compositionally biased stretch (basic and acidic residues) spans 29 to 46; sequence ADPRHPETNLETLHDRDL. Residues 52-62 are compositionally biased toward pro residues; it reads PLPPPPLPLHP. The 175-residue stretch at 205 to 379 folds into the MARVEL domain; the sequence is SWAGLLRILC…SAMVSLKLWR (175 aa). Residues 212–232 traverse the membrane as a helical segment; the sequence is ILCIVELLLGAAVFACVTAYI. At 233 to 266 the chain is on the extracellular side; that stretch reads HKDNEWYNMFGYSQPYGYTASMQGGYYYSGPKTP. Residues 267 to 287 form a helical membrane-spanning segment; that stretch reads FVLVVAGLAWIVTIILLVLGM. Residues 288–303 lie on the Cytoplasmic side of the membrane; that stretch reads SMYYRTILLDSTWWPL. A helical transmembrane segment spans residues 304-324; it reads TEFGINISLFILYMAGAIVYV. Residues 325–354 are Extracellular-facing; the sequence is NDTNRGGLCYYQLFNTPVNASFCRVEGGQT. A helical transmembrane segment spans residues 355-375; that stretch reads AAIIFLFVSMLMYFISAMVSL. The Cytoplasmic segment spans residues 376–568; sequence KLWRHESARK…KVMDWNDGYN (193 aa). Residues 451-562 enclose the OCEL domain; it reads PDYVAKYQAI…RIQEYDKVMD (112 aa). A coiled-coil region spans residues 462-559; that stretch reads AEDERERYKA…IKQRIQEYDK (98 aa).

This sequence belongs to the ELL/occludin family.

The protein localises to the cell membrane. It is found in the cell junction. The protein resides in the tight junction. Its function is as follows. May play a role in the formation of the epithelial barrier. In Xenopus tropicalis (Western clawed frog), this protein is MARVEL domain-containing protein 2 (marveld2).